A 206-amino-acid chain; its full sequence is Probable nicotinate-nucleotide adenylyltransferase (206 aa).

Belongs to the NadD family.

It carries out the reaction nicotinate beta-D-ribonucleotide + ATP + H(+) = deamido-NAD(+) + diphosphate. It functions in the pathway cofactor biosynthesis; NAD(+) biosynthesis; deamido-NAD(+) from nicotinate D-ribonucleotide: step 1/1. Its function is as follows. Catalyzes the reversible adenylation of nicotinate mononucleotide (NaMN) to nicotinic acid adenine dinucleotide (NaAD). This chain is Probable nicotinate-nucleotide adenylyltransferase, found in Paenarthrobacter aurescens (strain TC1).